Here is a 261-residue protein sequence, read N- to C-terminus: MRMALCLEYDGSRYYGWQRQREVASVQQCVEEALSKIANAPVEVTCAGRTDAGVHATAQIVHFDVPVPRADVAWTLGVNSNLPAGIAVRWAREVDSEFSARFSATSRRYRYIIANTRFRPGIHSAGVSHYHQPLDAEVMQEAAQALVGEHDFTAFRASHCQSHTPFRKVSDLTVERRGDYIIVDISANAFLHHMVRNIVGSLIVVGQHLQPPDWIGELLRQKDRTKAAATAKPGGLYLVAVTYPEHYNIPDAPLGPLWLGD.

The active-site Nucleophile is the Asp51. Substrate is bound at residue Tyr109.

This sequence belongs to the tRNA pseudouridine synthase TruA family. In terms of assembly, homodimer.

The enzyme catalyses uridine(38/39/40) in tRNA = pseudouridine(38/39/40) in tRNA. Its function is as follows. Formation of pseudouridine at positions 38, 39 and 40 in the anticodon stem and loop of transfer RNAs. The protein is tRNA pseudouridine synthase A of Idiomarina loihiensis (strain ATCC BAA-735 / DSM 15497 / L2-TR).